The sequence spans 237 residues: MSSFRLDVVSLVPEVFDSLRGLGVIGRAFHAGIAELHTHNPRDYATDRYRKVDDEPYGGGAGMVLKPEPVFAAFEAIPVQPSRRVLLMTPQGKPLQQADLRRWATDYEQLVLLCGHYEGFDERIRSLADEEVSLGDFVLTGGELPAMTIINGTVRLRPGTVGTADSLVEESHSAGLLEHPHYTRPATFREMDVPAVLRSGDHGAIARWRAEQQKERTQLRRPDLWAQWQAEHPGNEG.

Residues Gly-115 and Leu-134–Leu-139 each bind S-adenosyl-L-methionine.

The protein belongs to the RNA methyltransferase TrmD family. In terms of assembly, homodimer.

The protein resides in the cytoplasm. The enzyme catalyses guanosine(37) in tRNA + S-adenosyl-L-methionine = N(1)-methylguanosine(37) in tRNA + S-adenosyl-L-homocysteine + H(+). In terms of biological role, specifically methylates guanosine-37 in various tRNAs. This chain is tRNA (guanine-N(1)-)-methyltransferase, found in Synechococcus sp. (strain RCC307).